A 546-amino-acid chain; its full sequence is Putative serine/threonine-protein kinase L268 (546 aa).

Positions 1–112 (MVCFSKYSGI…ILQTLDFHLV (112 aa)) constitute a Cyclin N-terminal domain. Residues 260–544 (ITVVKNLGEG…QTLEEFNKFN (285 aa)) enclose the Protein kinase domain. Residues 266 to 274 (LGEGTYGTV) and Lys287 contribute to the ATP site. Asp389 acts as the Proton acceptor in catalysis.

This sequence belongs to the protein kinase superfamily. Ser/Thr protein kinase family.

The catalysed reaction is L-seryl-[protein] + ATP = O-phospho-L-seryl-[protein] + ADP + H(+). The enzyme catalyses L-threonyl-[protein] + ATP = O-phospho-L-threonyl-[protein] + ADP + H(+). In Acanthamoeba polyphaga mimivirus (APMV), this protein is Putative serine/threonine-protein kinase L268.